A 55-amino-acid polypeptide reads, in one-letter code: Large ribosomal subunit protein bL33 (55 aa).

It belongs to the bacterial ribosomal protein bL33 family.

The sequence is that of Large ribosomal subunit protein bL33 from Bartonella bacilliformis (strain ATCC 35685 / KC583 / Herrer 020/F12,63).